The following is a 602-amino-acid chain: Elongation factor 4 (602 aa).

Positions 7–189 constitute a tr-type G domain; sequence DKIRNFSIVA…AIVTRLPPPK (183 aa). GTP-binding positions include 19–24 and 136–139; these read DHGKST and NKVD.

This sequence belongs to the TRAFAC class translation factor GTPase superfamily. Classic translation factor GTPase family. LepA subfamily.

Its subcellular location is the cell inner membrane. The catalysed reaction is GTP + H2O = GDP + phosphate + H(+). Its function is as follows. Required for accurate and efficient protein synthesis under certain stress conditions. May act as a fidelity factor of the translation reaction, by catalyzing a one-codon backward translocation of tRNAs on improperly translocated ribosomes. Back-translocation proceeds from a post-translocation (POST) complex to a pre-translocation (PRE) complex, thus giving elongation factor G a second chance to translocate the tRNAs correctly. Binds to ribosomes in a GTP-dependent manner. The sequence is that of Elongation factor 4 from Caulobacter vibrioides (strain NA1000 / CB15N) (Caulobacter crescentus).